The following is a 115-amino-acid chain: Parathyroid hormone (115 aa).

The signal sequence occupies residues 1-25 (MMSAKDTVKVMVVMLAICFLARSDG). A propeptide spanning residues 26 to 31 (KPIKKR) is cleaved from the precursor. The important for receptor binding stretch occupies residues 51-69 (RVEWLRKKLQDVHNFVALG). The tract at residues 75 to 98 (RDGGSQRPRKKEDNVLVESHQKSL) is disordered.

Belongs to the parathyroid hormone family. In terms of assembly, interacts with PTH1R (via N-terminal extracellular domain).

Its subcellular location is the secreted. Functionally, parathyroid hormone elevates calcium level by dissolving the salts in bone and preventing their renal excretion. Acts by binding to its receptor, PTH1R, activating G protein-coupled receptor signaling. Stimulates [1-14C]-2-deoxy-D-glucose (2DG) transport and glycogen synthesis in osteoblastic cells. The chain is Parathyroid hormone (PTH) from Sus scrofa (Pig).